Here is a 507-residue protein sequence, read N- to C-terminus: Protein zntA (507 aa).

The N-terminal stretch at 1–18 (MSIFAYSILAGLAPLLSS) is a signal peptide. The N-linked (GlcNAc...) asparagine glycan is linked to asparagine 31. Residues 35-55 (FHILLCISAGLLFAVASLELI) form a helical membrane-spanning segment. Positions 124 to 179 (GLNLNNLNQATNLDNNEEDNDNLDNDGENEIENDHDHDHQEDEGGDNDHDHESEEK) are disordered. Residues 125 to 137 (LNLNNLNQATNLD) show a composition bias toward low complexity. The segment covering 138–154 (NNEEDNDNLDNDGENEI) has biased composition (acidic residues). Over residues 155 to 179 (ENDHDHDHQEDEGGDNDHDHESEEK) the composition is skewed to basic and acidic residues. Residues 185–205 (IPMYGIGFGFAILIIVESIFS) form a helical membrane-spanning segment. The interval 209–264 (GGGGGGGHHSHSHGSLSSSSSNDVISDYISNNNSNNINNNDDDNNNNNNNNDDDDD) is disordered. The segment covering 221-258 (HGSLSSSSSNDVISDYISNNNSNNINNNDDDNNNNNNN) has biased composition (low complexity). Asparagine 240, asparagine 298, asparagine 328, asparagine 342, and asparagine 351 each carry an N-linked (GlcNAc...) asparagine glycan. Residues 305-350 (PNIASPVMNKDNNNNDKDKNRNSNKSDIKNSGSINNGNNSGNNNNN) form a disordered region. The span at 317–332 (NNNDKDKNRNSNKSDI) shows a compositional bias: basic and acidic residues. Residues 333-350 (KNSGSINNGNNSGNNNNN) are compositionally biased toward low complexity. A run of 5 helical transmembrane segments spans residues 355–375 (LTIT…VVIS), 388–408 (VALA…SLIL), 422–442 (FFYF…SSFL), 451–471 (GAFV…TAIL), and 486–506 (LFSI…FHGA).

This sequence belongs to the ZIP transporter (TC 2.A.5) family.

The protein localises to the membrane. May transport divalent cations. May participate, with dstA, in the regulation of the differentiation of stalk cells during development. The polypeptide is Protein zntA (zntA) (Dictyostelium discoideum (Social amoeba)).